A 453-amino-acid chain; its full sequence is Probable glycine dehydrogenase (decarboxylating) subunit 1 (453 aa).

It belongs to the GcvP family. N-terminal subunit subfamily. The glycine cleavage system is composed of four proteins: P, T, L and H. In this organism, the P 'protein' is a heterodimer of two subunits.

It carries out the reaction N(6)-[(R)-lipoyl]-L-lysyl-[glycine-cleavage complex H protein] + glycine + H(+) = N(6)-[(R)-S(8)-aminomethyldihydrolipoyl]-L-lysyl-[glycine-cleavage complex H protein] + CO2. The glycine cleavage system catalyzes the degradation of glycine. The P protein binds the alpha-amino group of glycine through its pyridoxal phosphate cofactor; CO(2) is released and the remaining methylamine moiety is then transferred to the lipoamide cofactor of the H protein. In Caulobacter sp. (strain K31), this protein is Probable glycine dehydrogenase (decarboxylating) subunit 1.